The sequence spans 92 residues: Protein canopy homolog 1 (92 aa).

The protein belongs to the canopy family.

In Homo sapiens (Human), this protein is Protein canopy homolog 1 (CNPY1).